The following is a 512-amino-acid chain: D-alanine--D-alanyl carrier protein ligase (512 aa).

ATP is bound at residue 152–153 (TS). D199 contributes to the D-alanine binding site. ATP is bound at residue 294–299 (NAYGPT). Residue V303 coordinates D-alanine. Residues D385, 397–400 (YGGR), and K499 each bind ATP. A D-alanine-binding site is contributed by K499.

Belongs to the ATP-dependent AMP-binding enzyme family. DltA subfamily.

Its subcellular location is the cytoplasm. It carries out the reaction holo-[D-alanyl-carrier protein] + D-alanine + ATP = D-alanyl-[D-alanyl-carrier protein] + AMP + diphosphate. Its pathway is cell wall biogenesis; lipoteichoic acid biosynthesis. Functionally, catalyzes the first step in the D-alanylation of lipoteichoic acid (LTA), the activation of D-alanine and its transfer onto the D-alanyl carrier protein (Dcp) DltC. In an ATP-dependent two-step reaction, forms a high energy D-alanyl-AMP intermediate, followed by transfer of the D-alanyl residue as a thiol ester to the phosphopantheinyl prosthetic group of the Dcp. D-alanylation of LTA plays an important role in modulating the properties of the cell wall in Gram-positive bacteria, influencing the net charge of the cell wall. The protein is D-alanine--D-alanyl carrier protein ligase of Streptococcus equi subsp. equi (strain 4047).